The primary structure comprises 837 residues: Protein translocase subunit SecA (837 aa).

Residues Gln-85, 103 to 107 (GEGKT), and Asp-493 each bind ATP. Positions 821, 823, 832, and 833 each coordinate Zn(2+).

Belongs to the SecA family. Monomer and homodimer. Part of the essential Sec protein translocation apparatus which comprises SecA, SecYEG and auxiliary proteins SecDF. Other proteins may also be involved. Zn(2+) is required as a cofactor.

The protein resides in the cell membrane. Its subcellular location is the cytoplasm. It catalyses the reaction ATP + H2O + cellular proteinSide 1 = ADP + phosphate + cellular proteinSide 2.. Its function is as follows. Part of the Sec protein translocase complex. Interacts with the SecYEG preprotein conducting channel. Has a central role in coupling the hydrolysis of ATP to the transfer of proteins into and across the cell membrane, serving as an ATP-driven molecular motor driving the stepwise translocation of polypeptide chains across the membrane. The chain is Protein translocase subunit SecA from Streptococcus pneumoniae (strain Taiwan19F-14).